The primary structure comprises 93 residues: DNA/RNA-binding protein Alba 2 (93 aa).

Belongs to the histone-like Alba family.

The protein resides in the cytoplasm. It localises to the chromosome. Functionally, binds double-stranded DNA tightly but without sequence specificity. Involved in DNA compaction. This is DNA/RNA-binding protein Alba 2 from Methanopyrus kandleri (strain AV19 / DSM 6324 / JCM 9639 / NBRC 100938).